The sequence spans 61 residues: MSSKGEQPLVLWYNQLGMHDVDRVGGKNPSLGEMITNLSSLGVSVPNGFATTSYAFNLFLD.

Belongs to the PEP-utilizing enzyme family. Mg(2+) is required as a cofactor.

It catalyses the reaction pyruvate + ATP + H2O = phosphoenolpyruvate + AMP + phosphate + 2 H(+). It functions in the pathway carbohydrate biosynthesis; gluconeogenesis. Catalyzes the phosphorylation of pyruvate to phosphoenolpyruvate. This chain is Phosphoenolpyruvate synthase (ppsA), found in Enterobacter agglomerans (Erwinia herbicola).